The primary structure comprises 362 residues: Spermidine/putrescine import ATP-binding protein PotA (362 aa).

The region spanning Val6–Ile236 is the ABC transporter domain. Residue Gly38 to Thr45 participates in ATP binding.

It belongs to the ABC transporter superfamily. Spermidine/putrescine importer (TC 3.A.1.11.1) family. As to quaternary structure, the complex is composed of two ATP-binding proteins (PotA), two transmembrane proteins (PotB and PotC) and a solute-binding protein (PotD).

The protein localises to the cell membrane. The catalysed reaction is ATP + H2O + polyamine-[polyamine-binding protein]Side 1 = ADP + phosphate + polyamineSide 2 + [polyamine-binding protein]Side 1.. In terms of biological role, part of the ABC transporter complex PotABCD involved in spermidine/putrescine import. Responsible for energy coupling to the transport system. The polypeptide is Spermidine/putrescine import ATP-binding protein PotA (Lacticaseibacillus paracasei (strain ATCC 334 / BCRC 17002 / CCUG 31169 / CIP 107868 / KCTC 3260 / NRRL B-441) (Lactobacillus paracasei)).